The sequence spans 571 residues: Proline--tRNA ligase (571 aa).

The protein belongs to the class-II aminoacyl-tRNA synthetase family. ProS type 1 subfamily. Homodimer.

The protein localises to the cytoplasm. It catalyses the reaction tRNA(Pro) + L-proline + ATP = L-prolyl-tRNA(Pro) + AMP + diphosphate. In terms of biological role, catalyzes the attachment of proline to tRNA(Pro) in a two-step reaction: proline is first activated by ATP to form Pro-AMP and then transferred to the acceptor end of tRNA(Pro). As ProRS can inadvertently accommodate and process non-cognate amino acids such as alanine and cysteine, to avoid such errors it has two additional distinct editing activities against alanine. One activity is designated as 'pretransfer' editing and involves the tRNA(Pro)-independent hydrolysis of activated Ala-AMP. The other activity is designated 'posttransfer' editing and involves deacylation of mischarged Ala-tRNA(Pro). The misacylated Cys-tRNA(Pro) is not edited by ProRS. The chain is Proline--tRNA ligase from Aliivibrio fischeri (strain MJ11) (Vibrio fischeri).